A 197-amino-acid polypeptide reads, in one-letter code: Imidazoleglycerol-phosphate dehydratase (197 aa).

Belongs to the imidazoleglycerol-phosphate dehydratase family.

The protein localises to the cytoplasm. The catalysed reaction is D-erythro-1-(imidazol-4-yl)glycerol 3-phosphate = 3-(imidazol-4-yl)-2-oxopropyl phosphate + H2O. Its pathway is amino-acid biosynthesis; L-histidine biosynthesis; L-histidine from 5-phospho-alpha-D-ribose 1-diphosphate: step 6/9. The chain is Imidazoleglycerol-phosphate dehydratase from Teredinibacter turnerae (strain ATCC 39867 / T7901).